The primary structure comprises 297 residues: GTP cyclohydrolase FolE2 (297 aa).

2 disordered regions span residues 1-21 and 180-207; these read MTHASALGLTQHIPDTQSERD and IRAELMEPPGDRRRPPPPGGGESTRERP.

This sequence belongs to the GTP cyclohydrolase IV family.

The catalysed reaction is GTP + H2O = 7,8-dihydroneopterin 3'-triphosphate + formate + H(+). It functions in the pathway cofactor biosynthesis; 7,8-dihydroneopterin triphosphate biosynthesis; 7,8-dihydroneopterin triphosphate from GTP: step 1/1. Functionally, converts GTP to 7,8-dihydroneopterin triphosphate. This is GTP cyclohydrolase FolE2 from Methylibium petroleiphilum (strain ATCC BAA-1232 / LMG 22953 / PM1).